Here is a 162-residue protein sequence, read N- to C-terminus: Large ribosomal subunit protein bL9 (162 aa).

The protein belongs to the bacterial ribosomal protein bL9 family.

Binds to the 23S rRNA. This Chlorobaculum parvum (strain DSM 263 / NCIMB 8327) (Chlorobium vibrioforme subsp. thiosulfatophilum) protein is Large ribosomal subunit protein bL9.